Consider the following 1616-residue polypeptide: MSLYDSLLSNLQSINVDTRKKNADLKKLADGSLKFLYTNKNLSQDSLVSKLKGNEAFYKPFLFCCAKKIERHIYISLNSIQLLAINDALSPDILESLFNSLNAVIQLGQDSQLRVLQIIPIICTHYAASMKLPILISLFRICFNLHNSKNSVVSNAAAATLRQIVILVFDYLDYDTLAHKQEADLFLDSLSLFKGLCSLLSAGKSESLNVDHISTTFGLELLESILVNHHRLFQIPEFQDSVRKDLLPIITASLASMSDFPVALRISRILNIIFQHYVTSLTLDIEVIFSFIISSLDNSEAAWKKALFLEVLRSIFSNTNLLYLMYTLFDGNEGRKPIIKKLVTSLSRIVNEKPSVIGVGSRVVLADTFEDYSSTSSGNPPSSMEKVSGSFTGTKPEQIIGICRATILKTPCIEQFDKQEPPIIPFAYLVYLAMCSLASISNGIADFVFQFYEDVGKKEFTLLIEGIKCENFDSKEDSTARPQNIIKCQYGLISENWTSFLVAYSTFVSSALAVELLKFCLNSYVNFVSVCTLFGLETPRDALLTTLSNKAVPSNLLSGNMTHSASSSISHNGRLSTSTMFSVEGLKEAATTIAAIASYDSNHDEKQKCFSLREILFLRCLSSIAKVVGEKMGKGWKILFETFDKADIILNRSPTSKHLSTSSLNRVNSSNSNFQDSKSFSTLMDYELVSYKNELSELMYVTSSYSQPAYMEFLESLLAVITSSSVHPIQTLTAPRQSFNEDLLSANTKNSVYKTSANRSISGGIRLLRKSSEVFYSFSILETVCSCNLDRFLDSKLDHSGWSLISKSLSEVFKIINVAPELRTRAANCLANILVDVASRLSNENSPDSYAFQEIFFESLGMLLPVTEVSDNTSRGVEYDISTIGLEALVSILETVGHHVLHGWQYVFEMLRFNCLNGATCFGSEKGAKIVRLAFSCLQLICTDFLASLDTSNYLDLMDTLLVFCRQLEDANVSLTAVGLFWNVSDTLKNMFSTSDFSCAYNSVEDLYAFTSMKSKEILPEVLWIMLLVHLADLCENSWASVRNGAAQILFRIFNSQCSKLGTNAWASCCQLVIMKLLHSQPIQNVSDVNNKKDEDDHEQTSCLIISGIADVFSENMSLLLNVNGILDVLEEAFQLMLRLHSDIYPKICISNFKALRELSFSISEFGKENATFTLLIKLVFINWGRFCEVSFSERRLANISQEGLTLLIESVVFLLKAYNFGIEEIKDSLLQVRKAVFYEESTSFALDVDFLSSLQLAVESLTDLLISKFKLNHLVLELWSDVLTYAFNEEKTIRASLPTLICLSKKIFENAENVVENHSLDFLNRGTMQHMFESLLVPMRLKYRCPKASRVNQSTLPIWVLASKCFVRLMINCFKDLKGSDAIEDAEKMQCLFLLTVEATNSIISPNADYEYVWSLEDVFENEDVSSLKQLHNLWKPHLQLNCLSDEVAQYYITLCKGSFYYQMRNTEDMVISRSNLDIQKEAARNFFPSTESPVSNRRQRIAVDCFSILLDDYNSSYEHVSLTIRPILQSRLCWSLKRYVADKSVSGYLPLSKSQEMDMSTVAECLNNHPSLYSNPIHYLLRKAYHTTNASPVATSLNAILGQLTLKNEVLNAI.

Phosphoserine is present on residues Ser43 and Ser660.

This sequence belongs to the MON2 family. As to quaternary structure, homodimer.

The protein resides in the golgi apparatus membrane. In terms of biological role, required for traffic between late Golgi and early endosomes. Required for endocytosis and maintenance of vacuolar structure. This is Protein MON2 homolog (mon2) from Schizosaccharomyces pombe (strain 972 / ATCC 24843) (Fission yeast).